The primary structure comprises 259 residues: Synaptophysin-like protein 1 (259 aa).

The Cytoplasmic portion of the chain corresponds to 1–33 (MAPNIYLVRQRISRLGQRMSGFQINLNPLKEPL). The MARVEL domain maps to 28–237 (PLKEPLGFIK…NAWFVYKETS (210 aa)). A helical membrane pass occupies residues 34 to 54 (GFIKVLEWIASIFAFATCGGF). Over 55 to 116 (KGQTEIQVNC…LIGDYSSSAQ (62 aa)) the chain is Vesicular. An N-linked (GlcNAc...) asparagine glycan is attached at N71. A helical transmembrane segment spans residues 117–137 (FYVTFAVFVFLYCIAALLLYV). At 138 to 150 (GYTSLYLDSRKLP) the chain is on the cytoplasmic side. Residues 151–171 (MIDFVVTLVATFLWLVSTSAW) traverse the membrane as a helical segment. Over 172–212 (AKALTDIKIATGHNIIDELPPCKKKAVLCYFGSVTSMGSLN) the chain is Vesicular. N-linked (GlcNAc...) asparagine glycosylation occurs at N212. The helical transmembrane segment at 213-233 (VSVIFGFLNMILWGGNAWFVY) threads the bilayer. At 234 to 259 (KETSLHSPSNTSAPHSQGGIPPPTGI) the chain is on the cytoplasmic side.

It belongs to the synaptophysin/synaptobrevin family.

It localises to the cytoplasmic vesicle membrane. It is found in the melanosome. The protein is Synaptophysin-like protein 1 (SYPL1) of Homo sapiens (Human).